The sequence spans 608 residues: Serine/arginine repetitive matrix protein 4 (608 aa).

Disordered regions lie at residues 34–246 (ASIT…PLPR) and 261–608 (SAAD…STRR). Residues 78–100 (GREKACRELDPARAHSASQDRDP) are compositionally biased toward basic and acidic residues. Composition is skewed to basic residues over residues 107-123 (RGKK…RRRS) and 131-187 (VKKK…HRCP). Residues 188–200 (SRSQSSELRSPSC) are compositionally biased toward low complexity. Over residues 201–213 (ESRHRGRSPEEGR) the composition is skewed to basic and acidic residues. Over residues 214–228 (KSRRTHSRRCSKNHC) the composition is skewed to basic residues. The segment covering 289–299 (TSSPPSTQTSS) has biased composition (low complexity). The span at 322–339 (CGNTSDSGNSFTTSSPQN) shows a compositional bias: polar residues. 2 stretches are compositionally biased toward low complexity: residues 389-420 (RSSS…SRST) and 428-459 (SRSP…SRYS). Residues 460 to 477 (PSRERDLKYGEKEPQPRE) are compositionally biased toward basic and acidic residues. Basic residues predominate over residues 478 to 494 (RARRRRRSYSPMRKRRR). The segment covering 495–504 (DSPSHLEARR) has biased composition (basic and acidic residues). The span at 518 to 555 (PSPSSSSSLSSASSWYSSSSSSSSSSSRSPSRSYSRSR) shows a compositional bias: low complexity. Positions 556–573 (SPSRSHSSRSQTRSRTRT) are enriched in basic residues. Low complexity predominate over residues 574–608 (SRSSSSRSLSLGSRSRSRNRSLSYSSAESYASTRR).

The protein belongs to the nSR100 family. Phosphorylated. In terms of tissue distribution, specifically expressed in neuronal cells (at protein level). Expressed in adult nervous system and sensory organ tissues.

It localises to the nucleus. Functionally, splicing factor specifically required for neural cell differentiation. Acts in conjunction with nPTB/PTBP2 by binding directly to its regulated target transcripts and promotes neural-specific exon inclusion in many genes that function in neural cell differentiation. Required to promote the inclusion of neural-specific exon 10 in nPTB/PTBP2, leading to increased expression of neural-specific nPTB/PTBP2. Also promotes the inclusion of exon 16 in DAAM1 in neuron extracts. Promotes alternative splicing of REST transcripts to produce REST isoform 2 (REST4) with greatly reduced repressive activity, thereby activating expression of REST targets in neural cells. Plays an important role during embryonic development as well as in the proper functioning of the adult nervous system. Regulates alternative splicing events in genes with important neuronal functions. This Mus musculus (Mouse) protein is Serine/arginine repetitive matrix protein 4 (Srrm4).